A 354-amino-acid polypeptide reads, in one-letter code: Pyrimidine monooxygenase RutA (354 aa).

FMN is bound by residues 49–50 (IK), Asn-115, Glu-124, 140–141 (RY), and Ser-189.

It belongs to the NtaA/SnaA/DszA monooxygenase family. RutA subfamily.

It catalyses the reaction uracil + FMNH2 + NADH + O2 = (Z)-3-ureidoacrylate + FMN + NAD(+) + H2O + H(+). The enzyme catalyses thymine + FMNH2 + NADH + O2 = (Z)-2-methylureidoacrylate + FMN + NAD(+) + H2O + H(+). Functionally, catalyzes the pyrimidine ring opening between N-3 and C-4 by an unusual flavin hydroperoxide-catalyzed mechanism, adding oxygen atoms in the process to yield ureidoacrylate peracid, that immediately reacts with FMN forming ureidoacrylate and FMN-N(5)-oxide. The FMN-N(5)-oxide reacts spontaneously with NADH to produce FMN. Requires the flavin reductase RutF to regenerate FMN in vivo. This chain is Pyrimidine monooxygenase RutA, found in Caulobacter sp. (strain K31).